A 320-amino-acid chain; its full sequence is Ferrochelatase (320 aa).

Fe cation contacts are provided by histidine 194 and glutamate 275.

This sequence belongs to the ferrochelatase family. In terms of assembly, monomer.

The protein localises to the cytoplasm. It carries out the reaction heme b + 2 H(+) = protoporphyrin IX + Fe(2+). It participates in porphyrin-containing compound metabolism; protoheme biosynthesis; protoheme from protoporphyrin-IX: step 1/1. In terms of biological role, catalyzes the ferrous insertion into protoporphyrin IX. This chain is Ferrochelatase, found in Escherichia coli O9:H4 (strain HS).